We begin with the raw amino-acid sequence, 146 residues long: Protein disulfide-isomerase 5-1 (146 aa).

Residues 1–25 (MTLGARLVAPMIILLLFIPIELVKA) form the signal peptide. Residues 26 to 133 (EVITLTPETF…LKAFVVEETE (108 aa)) enclose the Thioredoxin domain. Catalysis depends on nucleophile residues C55 and C58. A disulfide bridge links C55 with C58.

Belongs to the protein disulfide isomerase family.

Acts as a protein-folding catalyst that interacts with nascent polypeptides to catalyze the formation, isomerization, and reduction or oxidation of disulfide bonds. This Arabidopsis thaliana (Mouse-ear cress) protein is Protein disulfide-isomerase 5-1 (PDIL5-1).